Reading from the N-terminus, the 138-residue chain is ATP synthase epsilon chain (138 aa).

The protein belongs to the ATPase epsilon chain family. In terms of assembly, F-type ATPases have 2 components, CF(1) - the catalytic core - and CF(0) - the membrane proton channel. CF(1) has five subunits: alpha(3), beta(3), gamma(1), delta(1), epsilon(1). CF(0) has three main subunits: a, b and c.

The protein resides in the cell inner membrane. Its function is as follows. Produces ATP from ADP in the presence of a proton gradient across the membrane. The sequence is that of ATP synthase epsilon chain from Acidovorax ebreus (strain TPSY) (Diaphorobacter sp. (strain TPSY)).